We begin with the raw amino-acid sequence, 770 residues long: ARF GTPase-activating protein GIT1 (770 aa).

The Arf-GAP domain occupies 1 to 124; the sequence is MSRKGPRAEV…AFVHKLPCRD (124 aa). The tract at residues 1 to 124 is interaction with gamma-tubulin and localization to the centrosome; that stretch reads MSRKGPRAEV…AFVHKLPCRD (124 aa). Residues 11-34 form a C4-type zinc finger; the sequence is CADCSAPDPGWASISRGVLVCDEC. ANK repeat units follow at residues 132–161, 166–195, and 199–228; these read DLSK…QANF, KGTT…DPGS, and NGRT…ELTD. Position 224 is a phosphotyrosine (Tyr-224). The interaction with PCLO stretch occupies residues 245 to 374; the sequence is HYIIPQMADR…QGKSLSSPTD (130 aa). The tract at residues 253 to 424 is interaction with PTK2/FAK1; it reads DRSRQKCMSQ…NRARSMDSSD (172 aa). The segment at 254-376 is interaction with ARHGEF7; it reads RSRQKCMSQS…KSLSSPTDNL (123 aa). The segment at 363–425 is disordered; that stretch reads RQQGKSLSSP…RARSMDSSDL (63 aa). The segment covering 366–383 has biased composition (polar residues); that stretch reads GKSLSSPTDNLELSARSQ. Phosphoserine occurs at positions 368 and 371. The residue at position 373 (Thr-373) is a Phosphothreonine. The interval 375–596 is interaction with NCK2 and GRIN3A; it reads NLELSARSQS…QEGSRHASKL (222 aa). Positions 375 to 596 are required for localization at synapses; that stretch reads NLELSARSQS…QEGSRHASKL (222 aa). Phosphoserine occurs at positions 379 and 384. Phosphotyrosine is present on Tyr-392. Ser-394 and Ser-397 each carry phosphoserine. The span at 394–403 shows a compositional bias: acidic residues; that stretch reads SVASDEDTDQ. Phosphothreonine is present on Thr-401. Residues Ser-419, Ser-422, and Ser-426 each carry the phosphoserine modification. The interval 420-475 is interaction with MAPK1; it reads MDSSDLSDGAVTLQEYLELKKALATSEAKVQQLMKVNSSLSDELRRLQREIHKLQA. An interaction with IKBKG region spans residues 429 to 629; sequence AVTLQEYLEL…EGKRFLELSK (201 aa). Positions 449–483 form a coiled coil; that stretch reads VQQLMKVNSSLSDELRRLQREIHKLQAENLQLRQP. 2 positions are modified to phosphoserine: Ser-507 and Ser-545. Thr-546 carries the post-translational modification Phosphothreonine. 2 positions are modified to phosphotyrosine: Tyr-554 and Tyr-563. Residues Ser-570, Ser-580, Ser-601, and Ser-605 each carry the phosphoserine modification. The segment covering 578 to 588 has biased composition (polar residues); it reads PSSPLLSCSQE. A disordered region spans residues 578–615; that stretch reads PSSPLLSCSQEGSRHASKLSRHGSGADSDYENTQSGDP. Residue Thr-610 is modified to Phosphothreonine. A Phosphoserine modification is found at Ser-639. Positions 646-770 are interaction with PXN and TGFB1I1; the sequence is PGLPSTEDVI…VTITTREKKQ (125 aa).

Forms homodimers and possibly oligomers. May forms heterooligomers with GIT2. Interacts with G protein-coupled receptor kinases, including GRK2, GRK3, GRK5 and GRK6. Interacts with PPFIA1, PPFIA2 and PPFIA4. Interacts with GRIP1 and forms a ternary complex with PPFIA1 and GRIP1. Directly interacts with ARHGEF7/beta-PIX, forming in vitro a heptameric complex made of a GIT1 dimer and an ARHGEF7 trimer. Directly interacts with PXN/paxillin; this interaction is enhanced in the presence of ARHGEF7. Directly interacts (via C-terminus) with TGFB1I1/Hic-5 (via LD motif 3). Directly interacts with PTK2/FAK1. May interact with PTK2B/PYK2; this interaction may be indirect. Interacts with AMPA receptors GRIA2/3. Directly interacts with protein Piccolo/PCLO. Forms a complex with Ephrin-B1/EFNB1 and NCK2/GRB4 (via SH2); this interaction is important for spine morphogenesis and synapse formation. Interaction with NCK2 is transient and depends upon GIT1 phosphorylation at Tyr-392. Interacts with GRIN3A/GluN3A (via C-terminus); this interaction competes with GIT1 interaction with ARHGEF7 and limits synaptic localization of GIT1. Interacts with IKBKG/NEMO in resting bone mesenchymal stem cells, as well as in TNF-stimulated cells; this interaction may increase IKBKG affinity for 'Lys-63'-linked polyubiquitin chains. Interacts with GABA(A) receptors, including GABRB3 and GABRG2. Interacts with SCRIB. Interacts (via N- and C-terminus) with ENTR1/SDCCAG3 (via N-terminus); this interaction is direct. May form a tripartite complex with ENTR1 and PTPN13. Interacts with YWHAZ. Interacts with PAK1. Interacts with PAK3. Directly interacts (via N-terminus) with gamma-tubulin. Interacts with MAPK1 and MAPK3; this interaction is required for MAPK1/3 recruitment to focal adhesions. Post-translationally, phosphorylated on tyrosine residues by PTK2/FAK1 and SRC in growing fibroblasts. Phosphorylation at Tyr-392 is induced by activation of Ephrin-B1/EFNB1 and catalyzed by SRC family kinases. It is required for the interaction with NCK2 and for GIT1 recruitment to synapses in hippocampal neurons. As to expression, expressed in the brain (at protein level). Also expressed at high levels in lung and heart. In lung, expressed in endothelial cells, especially in capillaries; also expressed in smooth muscle and epithelial cells of bronchi (at protein level). Expressed in bone marrow mesenchymal stem cells, as well as in osteoclasts and bone marrow-derived macrophages (at protein level).

The protein resides in the cytoplasm. It localises to the presynapse. Its subcellular location is the postsynapse. It is found in the postsynaptic density. The protein localises to the cell junction. The protein resides in the focal adhesion. It localises to the cell projection. Its subcellular location is the lamellipodium. It is found in the cytoskeleton. The protein localises to the microtubule organizing center. The protein resides in the centrosome. It localises to the spindle pole. Functionally, GTPase-activating protein for ADP ribosylation factor family members, including ARF1. Multidomain scaffold protein that interacts with numerous proteins and therefore participates in many cellular functions, including receptor internalization, focal adhesion remodeling, and signaling by both G protein-coupled receptors and tyrosine kinase receptors. Through PAK1 activation, positively regulates microtubule nucleation during interphase. Plays a role in the regulation of cytokinesis; for this function, may act in a pathway also involving ENTR1 and PTPN13. May promote cell motility both by regulating focal complex dynamics and by the activation of RAC1. May act as scaffold for MAPK1/3 signal transduction, recruiting MAPK1/3 to focal adhesions after EGF stimulation via a Src-dependent pathway, hence stimulating cell migration. Plays a role in brain development and function. Involved in the regulation of spine density and synaptic plasticity that is required for processes involved in learning. Plays an important role in dendritic spine morphogenesis and synapse formation. In hippocampal neurons, recruits guanine nucleotide exchange factors (GEFs), such as ARHGEF7/beta-PIX, to the synaptic membrane. These in turn locally activate RAC1, which is an essential step for spine morphogenesis and synapse formation. May contribute to the organization of presynaptic active zones through oligomerization and formation of a Piccolo/PCLO-based protein network, which includes ARHGEF7/beta-PIX and FAK1. In neurons, through its interaction with liprin-alpha family members, may be required for AMPA receptor (GRIA2/3) proper targeting to the cell membrane. In complex with GABA(A) receptors and ARHGEF7, plays a crucial role in regulating GABA(A) receptor synaptic stability, maintaining GPHN/gephyrin scaffolds and hence GABAergic inhibitory synaptic transmission, by locally coordinating RAC1 and PAK1 downstream effector activity, leading to F-actin stabilization. May also be important for RAC1 downstream signaling pathway through PAK3 and regulation of neuronal inhibitory transmission at presynaptic input. Required for successful bone regeneration during fracture healing. The function in intramembranous ossification may, at least partly, exerted by macrophages in which GIT1 is a key negative regulator of redox homeostasis, IL1B production, and glycolysis, acting through the ERK1/2/NRF2/NFE2L2 axis. May play a role in angiogenesis during fracture healing. In this process, may regulate activation of the canonical NF-kappa-B signal in bone mesenchymal stem cells by enhancing the interaction between NEMO and 'Lys-63'-ubiquitinated RIPK1/RIP1, eventually leading to enhanced production of VEGFA and others angiogenic factors. Essential for VEGF signaling through the activation of phospholipase C-gamma and ERK1/2, hence may control endothelial cell proliferation and angiogenesis. The chain is ARF GTPase-activating protein GIT1 (Git1) from Mus musculus (Mouse).